The primary structure comprises 830 residues: Nucleolar complex-associated protein 3 (830 aa).

5 disordered regions span residues 1-22 (MGKN…DVAE), 67-86 (KYEE…GNGE), 112-169 (KSKL…EETP), 391-436 (GKPN…KIRD), and 802-830 (LQSE…KKQI). Coiled-coil stretches lie at residues 61 to 81 (VMTV…LQEE) and 111 to 156 (KKSK…HEKD). The segment covering 67–84 (KYEEERSKRKTLQEEKGN) has biased composition (basic and acidic residues). Positions 118 to 129 (AETDEAEKDVLE) are enriched in acidic residues. Residues 130-140 (DEHVLNKSQRR) show a composition bias toward basic and acidic residues. The short motif at 138–145 (QRREKAKK) is the Nuclear localization signal 1 element. A compositionally biased stretch (basic residues) spans 141 to 150 (EKAKKSKREA). Acidic residues predominate over residues 159–168 (DEILQEEEET). Positions 391 to 400 (GKPNKEDEHN) are enriched in basic and acidic residues. The stretch at 400–429 (NKKYKKNNKRKTQEEQNQVQENERKKSKKD) forms a coiled coil. The short motif at 408–415 (KRKTQEEQ) is the Nuclear localization signal 2 element. Residues 420–436 (ENERKKSKKDMMSKIRD) are compositionally biased toward basic and acidic residues. The short motif at 806–813 (EKKPLKKQ) is the Nuclear localization signal 3 element. Basic residues predominate over residues 817 to 830 (VKKKLKNPKSKKQI).

The protein belongs to the CBF/MAK21 family. Component of nucleolar complexes. Interacts with RBL and NOC2 in both the nucleolus and nucleoplasm.

It localises to the nucleus. The protein resides in the nucleolus. It is found in the nucleoplasm. Functionally, may be required for synthesis of 60S ribosomal subunits and the transport of pre-ribosomes from the nucleoplasm to the cytoplasm. Also required for initiation of DNA replication. The sequence is that of Nucleolar complex-associated protein 3 from Arabidopsis thaliana (Mouse-ear cress).